The following is an 82-amino-acid chain: MIKLRLKRYGKKREVSYRIVAMRSTSRRDGRPLEELGFYNPRTDETRLNVPAIVKRLQDGAQPTETVRNILQKAKVFEQVNA.

The protein belongs to the bacterial ribosomal protein bS16 family.

The sequence is that of Small ribosomal subunit protein bS16 from Gloeothece citriformis (strain PCC 7424) (Cyanothece sp. (strain PCC 7424)).